The sequence spans 304 residues: UPF0282 protein TSIB_1029 (304 aa).

It belongs to the UPF0282 family.

The protein is UPF0282 protein TSIB_1029 of Thermococcus sibiricus (strain DSM 12597 / MM 739).